The following is a 101-amino-acid chain: Replication restart protein PriB (101 aa).

An SSB domain is found at 1–101 (MTTNNLVLAG…LHAENVELKT (101 aa)).

Belongs to the PriB family. Homodimer. Interacts with PriA and DnaT. Component of the replication restart primosome. Primosome assembly occurs via a 'hand-off' mechanism. PriA binds to replication forks, subsequently PriB then DnaT bind; DnaT then displaces ssDNA to generate the helicase loading substrate.

Functionally, involved in the restart of stalled replication forks, which reloads the replicative helicase on sites other than the origin of replication; the PriA-PriB pathway is the major replication restart pathway. During primosome assembly it facilitates complex formation between PriA and DnaT on DNA; stabilizes PriA on DNA. Stimulates the DNA unwinding activity of PriA helicase. This is Replication restart protein PriB from Shewanella piezotolerans (strain WP3 / JCM 13877).